Here is a 303-residue protein sequence, read N- to C-terminus: Probable aspartoacylase (303 aa).

2 residues coordinate Zn(2+): histidine 13 and glutamate 16. Substrate is bound by residues arginine 55 and 62-63 (NR). Residue histidine 104 coordinates Zn(2+). Positions 162 and 273 each coordinate substrate.

It belongs to the AspA/AstE family. Aspartoacylase subfamily. It depends on Zn(2+) as a cofactor.

It carries out the reaction an N-acyl-L-aspartate + H2O = a carboxylate + L-aspartate. The polypeptide is Probable aspartoacylase (Parasynechococcus marenigrum (strain WH8102)).